Reading from the N-terminus, the 204-residue chain is Nucleoside triphosphate pyrophosphatase (204 aa).

Residue D79 is the Proton acceptor of the active site.

The protein belongs to the Maf family. A divalent metal cation serves as cofactor.

Its subcellular location is the cytoplasm. The enzyme catalyses a ribonucleoside 5'-triphosphate + H2O = a ribonucleoside 5'-phosphate + diphosphate + H(+). The catalysed reaction is a 2'-deoxyribonucleoside 5'-triphosphate + H2O = a 2'-deoxyribonucleoside 5'-phosphate + diphosphate + H(+). In terms of biological role, nucleoside triphosphate pyrophosphatase. May have a dual role in cell division arrest and in preventing the incorporation of modified nucleotides into cellular nucleic acids. This Trichodesmium erythraeum (strain IMS101) protein is Nucleoside triphosphate pyrophosphatase.